The chain runs to 474 residues: Probable periplasmic serine endoprotease DegP-like (474 aa).

Residues 1–25 form the signal peptide; sequence MRNLKSVTPLLMAALLWGQSLLAQA. Active-site charge relay system residues include H113, D143, and S216. Substrate is bound by residues 214 to 216 and 271 to 275; these read GNS and LGVVI. 2 consecutive PDZ domains span residues 260 to 351 and 357 to 463; these read LKAD…VRDG and KVTI…LRQG.

Belongs to the peptidase S1C family.

The protein resides in the periplasm. The enzyme catalyses Acts on substrates that are at least partially unfolded. The cleavage site P1 residue is normally between a pair of hydrophobic residues, such as Val-|-Val.. Functionally, might be efficient in the degradation of transiently denatured and unfolded proteins which accumulate in the periplasm following stress conditions. This Ectopseudomonas mendocina (strain ymp) (Pseudomonas mendocina) protein is Probable periplasmic serine endoprotease DegP-like.